The chain runs to 203 residues: Type III effector protein HopBF1 (203 aa).

The segment at 1–23 is disordered; the sequence is MFNVSNNVAPSRYQGPSSTSVTP. Residues Ser-40, Gln-41, Lys-42, Asp-107, Ile-109, and Asp-114 each contribute to the ATP site. Residue Asp-155 is part of the active site. ATP is bound at residue Gln-157.

The protein belongs to the HopBF1 family.

The protein resides in the secreted. It is found in the host cell. It catalyses the reaction L-seryl-[protein] + ATP = O-phospho-L-seryl-[protein] + ADP + H(+). Effector protein that targets and inactivates the eukaryotic molecular chaperone HSP90 during infection. HopBF1 is recognized by HSP90 as a host client. As a result, HopBF1 phosphorylates HSP90, leading to the inactivation of the HSP90 ATPase activity and chaperone function. In vitro, can phosphorylate the recombinant yeast HSP82 (HSP90) and human HSP 90-beta on Ser-108. The sequence is that of Type III effector protein HopBF1 from Ewingella americana (strain ATCC 33852 / DSM 4580 / CCUG 14506 / JCM 5911 / LMG 7869 / NCTC 12157 / CDC 1468-78).